Reading from the N-terminus, the 370-residue chain is Aminomethyltransferase (370 aa).

Belongs to the GcvT family. In terms of assembly, the glycine cleavage system is composed of four proteins: P, T, L and H.

It carries out the reaction N(6)-[(R)-S(8)-aminomethyldihydrolipoyl]-L-lysyl-[protein] + (6S)-5,6,7,8-tetrahydrofolate = N(6)-[(R)-dihydrolipoyl]-L-lysyl-[protein] + (6R)-5,10-methylene-5,6,7,8-tetrahydrofolate + NH4(+). The glycine cleavage system catalyzes the degradation of glycine. The chain is Aminomethyltransferase from Leptospira biflexa serovar Patoc (strain Patoc 1 / Ames).